Here is an 899-residue protein sequence, read N- to C-terminus: Autophagy-related protein 9 (899 aa).

A disordered region spans residues M1–D173. At M1–R224 the chain is on the cytoplasmic side. Over residues S23–S33 the composition is skewed to low complexity. Polar residues predominate over residues A63 to R73. The segment covering A90–A104 has biased composition (low complexity). Residues D124–G142 are compositionally biased toward pro residues. Residues Q151–R160 show a composition bias toward polar residues. Residues T225–I245 traverse the membrane as a helical segment. Residues D246 to G270 are Lumenal-facing. Residues F271–L291 traverse the membrane as a helical segment. Residues T292 to R441 lie on the Cytoplasmic side of the membrane. The stretch at F442–A462 is an intramembrane region. Residues S463–Q527 lie on the Cytoplasmic side of the membrane. A helical transmembrane segment spans residues I528–L548. Residues L549 to E552 lie on the Lumenal side of the membrane. The chain crosses the membrane as a helical span at residues L553–T573. Topologically, residues T574–P629 are cytoplasmic. Residues K630 to F650 lie within the membrane without spanning it. Over R651–V899 the chain is Cytoplasmic. The interval D769–G876 is disordered. Positions I851–L860 are enriched in polar residues.

It belongs to the ATG9 family. As to quaternary structure, homotrimer; forms a homotrimer with a central pore that forms a path between the two membrane leaflets. Post-translationally, phosphorylated by ATG1. ATG1 phosphorylation is required for preautophagosome elongation.

It localises to the preautophagosomal structure membrane. The protein localises to the cytoplasmic vesicle membrane. It is found in the golgi apparatus membrane. The protein resides in the endoplasmic reticulum membrane. The enzyme catalyses a 1,2-diacyl-sn-glycero-3-phosphocholine(in) = a 1,2-diacyl-sn-glycero-3-phosphocholine(out). It catalyses the reaction a 1,2-diacyl-sn-glycero-3-phospho-L-serine(in) = a 1,2-diacyl-sn-glycero-3-phospho-L-serine(out). It carries out the reaction a 1,2-diacyl-sn-glycero-3-phosphoethanolamine(in) = a 1,2-diacyl-sn-glycero-3-phosphoethanolamine(out). The catalysed reaction is a 1,2-diacyl-sn-glycero-3-phospho-(1D-myo-inositol-3-phosphate)(in) = a 1,2-diacyl-sn-glycero-3-phospho-(1D-myo-inositol-3-phosphate)(out). In terms of biological role, phospholipid scramblase involved in autophagy and cytoplasm to vacuole transport (Cvt) vesicle formation. Cycles between the preautophagosomal structure/phagophore assembly site (PAS) and the cytoplasmic vesicle pool and supplies membrane for the growing autophagosome. Lipid scramblase activity plays a key role in preautophagosomal structure/phagophore assembly by distributing the phospholipids that arrive through ATG2 from the cytoplasmic to the luminal leaflet of the bilayer, thereby driving autophagosomal membrane expansion. Required for mitophagy. Also involved in endoplasmic reticulum-specific autophagic process and is essential for the survival of cells subjected to severe ER stress. Different machineries are required for anterograde trafficking to the PAS during either the Cvt pathway or bulk autophagy and for retrograde trafficking. This is Autophagy-related protein 9 (ATG9) from Phaeosphaeria nodorum (strain SN15 / ATCC MYA-4574 / FGSC 10173) (Glume blotch fungus).